The following is a 98-amino-acid chain: Small ribosomal subunit protein bS20 (98 aa).

The protein belongs to the bacterial ribosomal protein bS20 family.

Functionally, binds directly to 16S ribosomal RNA. This chain is Small ribosomal subunit protein bS20, found in Synechococcus sp. (strain CC9902).